A 116-amino-acid chain; its full sequence is MSNVIAELGNATKRTDLPDFRSGDTVKVHVKVVEGNRSRVQIFQGVVIRLQGSGVGRSFTVRKVSFGVGVERTFPLHSPIFEQIEVVTRGDVRRAKLYYLRNLRGKKAKIKERREA.

It belongs to the bacterial ribosomal protein bL19 family.

Its function is as follows. This protein is located at the 30S-50S ribosomal subunit interface and may play a role in the structure and function of the aminoacyl-tRNA binding site. The protein is Large ribosomal subunit protein bL19 of Nocardioides sp. (strain ATCC BAA-499 / JS614).